Consider the following 91-residue polypeptide: Protein transport protein Sec61 subunit beta (91 aa).

A disordered region spans residues 1–45; sequence MSTSAQVPGGPAAQMKRRNNAQRQEAKASQRPTSTRSVGAGGSSS. Topologically, residues 1–62 are cytoplasmic; that stretch reads MSTSAQVPGG…DESQGLKVDP (62 aa). A compositionally biased stretch (polar residues) spans 30–45; sequence QRPTSTRSVGAGGSSS. Residues 63–83 traverse the membrane as a helical segment; sequence VVVMVLSLGFIFSVVALHILA.

Belongs to the SEC61-beta family. In terms of assembly, heterotrimeric complex composed of SEC61, SEB1 and SSS1.

It localises to the endoplasmic reticulum membrane. In terms of biological role, necessary for protein translocation in the endoplasmic reticulum. The protein is Protein transport protein Sec61 subunit beta (SBH1) of Yarrowia lipolytica (strain CLIB 122 / E 150) (Yeast).